A 68-amino-acid chain; its full sequence is Large ribosomal subunit protein uL30 (68 aa).

The protein belongs to the universal ribosomal protein uL30 family. In terms of assembly, part of the 50S ribosomal subunit.

This is Large ribosomal subunit protein uL30 from Bartonella henselae (strain ATCC 49882 / DSM 28221 / CCUG 30454 / Houston 1) (Rochalimaea henselae).